The sequence spans 574 residues: Putative thiamine pyrophosphate-containing protein YdaP (574 aa).

The stretch at 28-55 forms a coiled coil; sequence DSINEFIEELRHERNQLKFIQTRHEEVA. Glu-52 contributes to the thiamine diphosphate binding site. Residues 256–277 and 294–313 each bind FAD; these read IGTK…LGTS and DSDP…LVCD. A thiamine pyrophosphate binding region spans residues 384–464; it reads TVTVWMARHF…ITVVILNNEN (81 aa). 2 residues coordinate Mg(2+): Asp-435 and Asn-462.

Belongs to the TPP enzyme family. Mg(2+) is required as a cofactor. Thiamine diphosphate serves as cofactor.

The chain is Putative thiamine pyrophosphate-containing protein YdaP (ydaP) from Bacillus subtilis (strain 168).